The sequence spans 137 residues: MKLNLYVLTPKRIIWDCEVKEIILSTNSGQIGVLPNHAPINTAVDMGPLRIRLLNDQWLTAVLWSGFARIVNNEIIILGNDAELGSDIDPNEAQQALEIAEANLSKAEGTKELVEAKLALRRARIRIEAVNWIPPSN.

The protein belongs to the ATPase epsilon chain family. As to quaternary structure, F-type ATPases have 2 components, CF(1) - the catalytic core - and CF(0) - the membrane proton channel. CF(1) has five subunits: alpha(3), beta(3), gamma(1), delta(1), epsilon(1). CF(0) has three main subunits: a, b and c.

It localises to the plastid. It is found in the chloroplast thylakoid membrane. Its function is as follows. Produces ATP from ADP in the presence of a proton gradient across the membrane. This Agrostis stolonifera (Creeping bentgrass) protein is ATP synthase epsilon chain, chloroplastic.